Here is an 89-residue protein sequence, read N- to C-terminus: Microcin N (89 aa).

Residues 1–15 form the signal peptide; it reads MRELDREELNCVGGA.

This sequence belongs to the class IIa microcin family. Mass spectrometry suggests 3 of the 4 Met residues of the mature peptide are oxidized.

It is found in the secreted. Its function is as follows. Active against E.coli and Salmonella, but not Listeria or Campylobacter. Channel-forming microcin. Probably neutralized by its immunity protein McnI. The protein is Microcin N of Escherichia coli.